The following is a 1206-amino-acid chain: DNA polymerase (1206 aa).

Belongs to the DNA polymerase type-B family.

The catalysed reaction is DNA(n) + a 2'-deoxyribonucleoside 5'-triphosphate = DNA(n+1) + diphosphate. The polypeptide is DNA polymerase (dpo) (Pyramimonas orientalis virus (PoV01)).